The sequence spans 160 residues: Aspartate carbamoyltransferase regulatory chain (160 aa).

4 residues coordinate Zn(2+): Cys-110, Cys-115, Cys-140, and Cys-143.

This sequence belongs to the PyrI family. As to quaternary structure, contains catalytic and regulatory chains. The cofactor is Zn(2+).

Functionally, involved in allosteric regulation of aspartate carbamoyltransferase. The sequence is that of Aspartate carbamoyltransferase regulatory chain from Hyperthermus butylicus (strain DSM 5456 / JCM 9403 / PLM1-5).